Consider the following 184-residue polypeptide: ATP synthase subunit b (184 aa).

The chain crosses the membrane as a helical span at residues 15–34 (VQPGLIFWTLVTFVIAAVVL).

Belongs to the ATPase B chain family. In terms of assembly, F-type ATPases have 2 components, F(1) - the catalytic core - and F(0) - the membrane proton channel. F(1) has five subunits: alpha(3), beta(3), gamma(1), delta(1), epsilon(1). F(0) has three main subunits: a(1), b(2) and c(10-14). The alpha and beta chains form an alternating ring which encloses part of the gamma chain. F(1) is attached to F(0) by a central stalk formed by the gamma and epsilon chains, while a peripheral stalk is formed by the delta and b chains.

Its subcellular location is the cell inner membrane. Its function is as follows. F(1)F(0) ATP synthase produces ATP from ADP in the presence of a proton or sodium gradient. F-type ATPases consist of two structural domains, F(1) containing the extramembraneous catalytic core and F(0) containing the membrane proton channel, linked together by a central stalk and a peripheral stalk. During catalysis, ATP synthesis in the catalytic domain of F(1) is coupled via a rotary mechanism of the central stalk subunits to proton translocation. Functionally, component of the F(0) channel, it forms part of the peripheral stalk, linking F(1) to F(0). This is ATP synthase subunit b from Myxococcus xanthus (strain DK1622).